We begin with the raw amino-acid sequence, 86 residues long: Small ribosomal subunit protein eS27y (86 aa).

A C4-type zinc finger spans residues 39-61; it reads CQGCFNITTVFSHSQTVVVCGNC.

This sequence belongs to the eukaryotic ribosomal protein eS27 family. Zn(2+) serves as cofactor.

Its function is as follows. May be involved in the elimination of damaged mRNA after UV irradiation. This chain is Small ribosomal subunit protein eS27y (RPS27B), found in Arabidopsis thaliana (Mouse-ear cress).